The following is a 414-amino-acid chain: Histidine--tRNA ligase (414 aa).

The protein belongs to the class-II aminoacyl-tRNA synthetase family. As to quaternary structure, homodimer.

Its subcellular location is the cytoplasm. It carries out the reaction tRNA(His) + L-histidine + ATP = L-histidyl-tRNA(His) + AMP + diphosphate + H(+). This chain is Histidine--tRNA ligase, found in Ehrlichia ruminantium (strain Welgevonden).